A 486-amino-acid chain; its full sequence is Cardiolipin synthase A (486 aa).

2 helical membrane-spanning segments follow: residues 3–23 and 38–58; these read TFYT…IAGV and MAWL…YLSL. 2 consecutive PLD phosphodiesterase domains span residues 219–246 and 399–426; these read MDLR…VDPR and EGGL…DMRS. Residues His224, Lys226, Asp231, His404, Lys406, and Asp411 contribute to the active site.

The protein belongs to the phospholipase D family. Cardiolipin synthase subfamily. ClsA sub-subfamily.

It is found in the cell inner membrane. It carries out the reaction 2 a 1,2-diacyl-sn-glycero-3-phospho-(1'-sn-glycerol) = a cardiolipin + glycerol. Functionally, catalyzes the reversible phosphatidyl group transfer from one phosphatidylglycerol molecule to another to form cardiolipin (CL) (diphosphatidylglycerol) and glycerol. This Erwinia tasmaniensis (strain DSM 17950 / CFBP 7177 / CIP 109463 / NCPPB 4357 / Et1/99) protein is Cardiolipin synthase A.